The chain runs to 766 residues: Protein zer-1 homolog (766 aa).

Residue A2 is modified to N-acetylalanine. LRR repeat units lie at residues 226–245, 246–268, and 278–302; these read SLVL…IVQL, HKLR…KLTR, and LGNL…KMEE. ARM repeat units follow at residues 427–467, 511–556, 558–600, 602–643, and 714–756; these read RSEQ…NFGI, DNDH…NITD, TPDN…NVAE, KELR…HIMF, and PDKY…HCSN.

This sequence belongs to the zyg-11 family. Interacts with the ELOC-ELOB/Elongin BC complex. Part of an E3 ubiquitin ligase complex including ZER1, CUL2 and Elongin BC.

Functionally, serves as substrate adapter subunit in the E3 ubiquitin ligase complex ZYG11B-CUL2-Elongin BC. Acts redudantly with ZYG11B to target substrates bearing N-terminal glycine degrons for proteasomal degradation. Involved in the clearance of proteolytic fragments generated by caspase cleavage during apoptosis since N-terminal glycine degrons are strongly enriched at caspase cleavage sites. Also important in the quality control of protein N-myristoylation in which N-terminal glycine degrons are conditionally exposed after a failure of N-myristoylation. The protein is Protein zer-1 homolog (ZER1) of Pongo abelii (Sumatran orangutan).